Here is a 240-residue protein sequence, read N- to C-terminus: Spore coat polysaccharide biosynthesis protein SpsF (240 aa).

It belongs to the CMP-NeuNAc synthase family.

It participates in spore coat biogenesis; spore coat polysaccharide biosynthesis. In Bacillus subtilis (strain 168), this protein is Spore coat polysaccharide biosynthesis protein SpsF (spsF).